A 313-amino-acid chain; its full sequence is Putative S-adenosyl-L-methionine-dependent methyltransferase MUL_0706 (313 aa).

S-adenosyl-L-methionine contacts are provided by residues Asp-132 and 161–162; that span reads DL.

Belongs to the UPF0677 family.

Functionally, exhibits S-adenosyl-L-methionine-dependent methyltransferase activity. The sequence is that of Putative S-adenosyl-L-methionine-dependent methyltransferase MUL_0706 from Mycobacterium ulcerans (strain Agy99).